The sequence spans 375 residues: tRNA-specific 2-thiouridylase MnmA (375 aa).

ATP is bound by residues Gly-8–Ser-15 and Met-34. The interval Asn-104–Asp-106 is interaction with target base in tRNA. Cys-109 acts as the Nucleophile in catalysis. A disulfide bridge connects residues Cys-109 and Cys-208. Gly-134 contributes to the ATP binding site. Positions Lys-158–Gln-160 are interaction with tRNA. The active-site Cysteine persulfide intermediate is Cys-208. The segment at Arg-321–Tyr-322 is interaction with tRNA.

The protein belongs to the MnmA/TRMU family.

It is found in the cytoplasm. It catalyses the reaction S-sulfanyl-L-cysteinyl-[protein] + uridine(34) in tRNA + AH2 + ATP = 2-thiouridine(34) in tRNA + L-cysteinyl-[protein] + A + AMP + diphosphate + H(+). Catalyzes the 2-thiolation of uridine at the wobble position (U34) of tRNA, leading to the formation of s(2)U34. The protein is tRNA-specific 2-thiouridylase MnmA of Mycoplasma capricolum subsp. capricolum (strain California kid / ATCC 27343 / NCTC 10154).